The primary structure comprises 93 residues: Aspartyl/glutamyl-tRNA(Asn/Gln) amidotransferase subunit C (93 aa).

It belongs to the GatC family. In terms of assembly, heterotrimer of A, B and C subunits.

It catalyses the reaction L-glutamyl-tRNA(Gln) + L-glutamine + ATP + H2O = L-glutaminyl-tRNA(Gln) + L-glutamate + ADP + phosphate + H(+). The catalysed reaction is L-aspartyl-tRNA(Asn) + L-glutamine + ATP + H2O = L-asparaginyl-tRNA(Asn) + L-glutamate + ADP + phosphate + 2 H(+). Its function is as follows. Allows the formation of correctly charged Asn-tRNA(Asn) or Gln-tRNA(Gln) through the transamidation of misacylated Asp-tRNA(Asn) or Glu-tRNA(Gln) in organisms which lack either or both of asparaginyl-tRNA or glutaminyl-tRNA synthetases. The reaction takes place in the presence of glutamine and ATP through an activated phospho-Asp-tRNA(Asn) or phospho-Glu-tRNA(Gln). This chain is Aspartyl/glutamyl-tRNA(Asn/Gln) amidotransferase subunit C, found in Methanocella arvoryzae (strain DSM 22066 / NBRC 105507 / MRE50).